The primary structure comprises 387 residues: MQVFWFIPTHGDSRYLGTAEGARQVDHTYLQQVAVAADTLGYEGVLIPTGRSCEDPWVVAASLIPVTKRLRFLVAVRPGLMAPTLAARMAATYDRLSNGRLLVNLVTGGDPAELAGDGLFLDHAQRYEASEEFIRIWRETLAASHEGAALDYTGKHLSVKGAKVLYPPVQRPHPPVYFGGSSEAAHELAAEQVDSYLTWGEPPAAVAEKIADVRARAAKHGRTVRFGIRLHVIVRETEDEAWAAADKLISKLDDDTVARAQEAFRKMDSAGQQRMAALHANGVKRTRADLEISPNLWAGVGLVRGGAGTALVGDPQTVAARMKEYADLGIDTFVLSGYPHLEEAYRFAELVFPLLPRSVRDKLPGNVLNGPFGEVIATGIVPRVAAS.

The protein belongs to the SsuD family.

The enzyme catalyses an alkanesulfonate + FMNH2 + O2 = an aldehyde + FMN + sulfite + H2O + 2 H(+). In terms of biological role, catalyzes the desulfonation of aliphatic sulfonates. The sequence is that of Alkanesulfonate monooxygenase from Ralstonia pickettii (strain 12J).